A 126-amino-acid polypeptide reads, in one-letter code: Alpha-lactalbumin (126 aa).

The C-type lysozyme domain occupies 1-126 (KVFEKCELSQ…CIADLDQWKC (126 aa)). Intrachain disulfides connect Cys-6-Cys-126, Cys-30-Cys-117, Cys-63-Cys-82, and Cys-78-Cys-96. Asn-47 is a glycosylation site (N-linked (GlcNAc...) asparagine). Ca(2+) contacts are provided by Lys-84, Asp-87, Asp-89, Asp-92, and Asp-93.

This sequence belongs to the glycosyl hydrolase 22 family. In terms of assembly, lactose synthase (LS) is a heterodimer of a catalytic component, beta1,4-galactosyltransferase (beta4Gal-T1) and a regulatory component, alpha-lactalbumin (LA). Mammary gland specific. Secreted in milk.

The protein localises to the secreted. Functionally, regulatory subunit of lactose synthase, changes the substrate specificity of galactosyltransferase in the mammary gland making glucose a good acceptor substrate for this enzyme. This enables LS to synthesize lactose, the major carbohydrate component of milk. In other tissues, galactosyltransferase transfers galactose onto the N-acetylglucosamine of the oligosaccharide chains in glycoproteins. This Tachyglossus aculeatus aculeatus (Southeast Australian short-beaked echidna) protein is Alpha-lactalbumin (LALBA).